The primary structure comprises 3166 residues: Intermembrane lipid transfer protein VPS13A (3166 aa).

Residues 3 to 116 (FESVVVEVLN…LMETKQQELK (114 aa)) enclose the Chorein N-terminal domain. 2 TPR repeats span residues 212–245 (LFAY…ENIV) and 373–406 (LTSK…QQAE). Thr831 bears the Phosphothreonine mark. Phosphoserine is present on Ser835. Residues 838–844 (EFFDAPC) carry the FFAT motif. Residues 1343–1359 (APSSANKDPETMTSGVT) are compositionally biased toward polar residues. Positions 1343–1365 (APSSANKDPETMTSGVTSPPDHS) are disordered. Ser1410 carries the phosphoserine modification. 2 TPR repeats span residues 1806-1840 (AIVE…TLSK) and 1999-2034 (ISVF…VPED). One can recognise an SHR-BD domain in the interval 2202–2447 (VAFHSPYWMV…VYYTWADPVG (246 aa)). Required for mitochondrial localization regions lie at residues 2607–3166 (LQPH…SPRL) and 2743–3166 (EYEV…SPRL). TPR repeat units follow at residues 2716-2750 (ADLV…VSSV) and 2852-2890 (ILGL…PEEF). The required for lipid droplet localization stretch occupies residues 2945 to 3019 (PAGLREGITR…SSTFQGIKRA (75 aa)).

Belongs to the VPS13 family. As to quaternary structure, interacts (via FFAT motif) with VAPA and VAPB. Interacts with RAB7A. Interacts with XK.

It is found in the mitochondrion outer membrane. It localises to the endoplasmic reticulum membrane. The protein resides in the endosome membrane. Its subcellular location is the lysosome membrane. The protein localises to the lipid droplet. It is found in the golgi apparatus. It localises to the cytoplasmic vesicle. The protein resides in the secretory vesicle. Its subcellular location is the neuronal dense core vesicle. Mediates the transfer of lipids between membranes at organelle contact sites. Required for the formation or stabilization of ER-mitochondria contact sites which enable transfer of lipids between the ER and mitochondria. Negatively regulates lipid droplet size and motility. Required for efficient lysosomal protein degradation. In Mus musculus (Mouse), this protein is Intermembrane lipid transfer protein VPS13A.